A 177-amino-acid chain; its full sequence is ATP synthase subunit delta (177 aa).

Belongs to the ATPase delta chain family. In terms of assembly, F-type ATPases have 2 components, F(1) - the catalytic core - and F(0) - the membrane proton channel. F(1) has five subunits: alpha(3), beta(3), gamma(1), delta(1), epsilon(1). F(0) has three main subunits: a(1), b(2) and c(10-14). The alpha and beta chains form an alternating ring which encloses part of the gamma chain. F(1) is attached to F(0) by a central stalk formed by the gamma and epsilon chains, while a peripheral stalk is formed by the delta and b chains.

It localises to the cell inner membrane. Its function is as follows. F(1)F(0) ATP synthase produces ATP from ADP in the presence of a proton or sodium gradient. F-type ATPases consist of two structural domains, F(1) containing the extramembraneous catalytic core and F(0) containing the membrane proton channel, linked together by a central stalk and a peripheral stalk. During catalysis, ATP synthesis in the catalytic domain of F(1) is coupled via a rotary mechanism of the central stalk subunits to proton translocation. In terms of biological role, this protein is part of the stalk that links CF(0) to CF(1). It either transmits conformational changes from CF(0) to CF(1) or is implicated in proton conduction. In Shewanella sediminis (strain HAW-EB3), this protein is ATP synthase subunit delta.